A 387-amino-acid polypeptide reads, in one-letter code: tRNA-specific 2-thiouridylase MnmA (387 aa).

ATP contacts are provided by residues 34 to 41 (AMSGGVDS) and Met-60. Cys-127 acts as the Nucleophile in catalysis. A disulfide bond links Cys-127 and Cys-223. Gly-151 provides a ligand contact to ATP. The segment at 173-175 (KDQ) is interaction with tRNA. Catalysis depends on Cys-223, which acts as the Cysteine persulfide intermediate.

This sequence belongs to the MnmA/TRMU family.

The protein localises to the cytoplasm. It catalyses the reaction S-sulfanyl-L-cysteinyl-[protein] + uridine(34) in tRNA + AH2 + ATP = 2-thiouridine(34) in tRNA + L-cysteinyl-[protein] + A + AMP + diphosphate + H(+). Functionally, catalyzes the 2-thiolation of uridine at the wobble position (U34) of tRNA, leading to the formation of s(2)U34. The protein is tRNA-specific 2-thiouridylase MnmA of Anaplasma marginale (strain St. Maries).